We begin with the raw amino-acid sequence, 119 residues long: Protein yippee-like 2 (119 aa).

The 98-residue stretch at 19-116 (RTYSCIHCRA…IELAHMIKDN (98 aa)) folds into the Yippee domain. Zn(2+) contacts are provided by Cys23, Cys26, Cys79, and Cys82.

The protein belongs to the yippee family. In terms of assembly, may interact with FAM168B.

The protein resides in the nucleus. It localises to the nucleolus. In Chlorocebus aethiops (Green monkey), this protein is Protein yippee-like 2 (YPEL2).